We begin with the raw amino-acid sequence, 507 residues long: Histidine--tRNA ligase (507 aa).

This sequence belongs to the class-II aminoacyl-tRNA synthetase family. As to quaternary structure, homodimer.

The protein resides in the cytoplasm. The enzyme catalyses tRNA(His) + L-histidine + ATP = L-histidyl-tRNA(His) + AMP + diphosphate + H(+). The polypeptide is Histidine--tRNA ligase (Rhizobium leguminosarum bv. trifolii (strain WSM2304)).